The sequence spans 403 residues: Putative F-box protein At5g41500 (403 aa).

An F-box domain is found at Ala-2 to Met-47.

The protein is Putative F-box protein At5g41500 of Arabidopsis thaliana (Mouse-ear cress).